A 218-amino-acid polypeptide reads, in one-letter code: Small ribosomal subunit protein mS34 (218 aa).

The interval 180-218 (KNGDTSTEEPMLNVQRIRMEPWDYPAKQEDKGRAKGTPV) is disordered. Over residues 196-212 (IRMEPWDYPAKQEDKGR) the composition is skewed to basic and acidic residues.

Belongs to the mitochondrion-specific ribosomal protein mS34 family. In terms of assembly, component of the mitochondrial small ribosomal subunit (mt-SSU). Mature mammalian 55S mitochondrial ribosomes consist of a small (28S) and a large (39S) subunit. The 28S small subunit contains a 12S ribosomal RNA (12S mt-rRNA) and 30 different proteins. The 39S large subunit contains a 16S rRNA (16S mt-rRNA), a copy of mitochondrial valine transfer RNA (mt-tRNA(Val)), which plays an integral structural role, and 52 different proteins.

The protein resides in the mitochondrion. In terms of biological role, required for mitochondrial translation, plays a role in maintaining the stability of the small ribosomal subunit and the 12S rRNA that are required for mitoribosome formation. The polypeptide is Small ribosomal subunit protein mS34 (MRPS34) (Homo sapiens (Human)).